A 193-amino-acid chain; its full sequence is Thioredoxin reductase-like selenoprotein T1b (193 aa).

The signal sequence occupies residues 1-21; it reads METRCLYLLLVCVLSVNHATA. A cross-link (cysteinyl-selenocysteine (Cys-Sec)) is located at residues 44–47; that stretch reads CVSU. Sec-47 is a non-standard amino acid (selenocysteine).

It belongs to the SelWTH family. Selenoprotein T subfamily. Post-translationally, may contain a selenide-sulfide bond between Cys-44 and Sec-47. This bond is speculated to serve as redox-active pair. Widely expressed in the embryo. High level in embryonic blood at 24 hours post-fertilization (hpf).

The protein localises to the endoplasmic reticulum membrane. It carries out the reaction [thioredoxin]-dithiol + NADP(+) = [thioredoxin]-disulfide + NADPH + H(+). In terms of biological role, selenoprotein with thioredoxin reductase-like oxidoreductase activity. The chain is Thioredoxin reductase-like selenoprotein T1b from Danio rerio (Zebrafish).